A 95-amino-acid chain; its full sequence is Sec-independent protein translocase protein TatA (95 aa).

The helical transmembrane segment at 1 to 21 (MGSMSVWHWVIVAVVVMLLFG) threads the bilayer. The interval 42–95 (GMADDETQPNTATSVPPVGPNDPVRTLPHQGAPGTAPQPPHVQPHVSAGDHKAV) is disordered.

This sequence belongs to the TatA/E family. As to quaternary structure, the Tat system comprises two distinct complexes: a TatABC complex, containing multiple copies of TatA, TatB and TatC subunits, and a separate TatA complex, containing only TatA subunits. Substrates initially bind to the TatABC complex, which probably triggers association of the separate TatA complex to form the active translocon.

The protein resides in the cell inner membrane. Functionally, part of the twin-arginine translocation (Tat) system that transports large folded proteins containing a characteristic twin-arginine motif in their signal peptide across membranes. TatA could form the protein-conducting channel of the Tat system. The sequence is that of Sec-independent protein translocase protein TatA from Methylorubrum extorquens (strain CM4 / NCIMB 13688) (Methylobacterium extorquens).